A 336-amino-acid polypeptide reads, in one-letter code: Phosphate acyltransferase (336 aa).

This sequence belongs to the PlsX family. In terms of assembly, homodimer. Probably interacts with PlsY.

It is found in the cytoplasm. It carries out the reaction a fatty acyl-[ACP] + phosphate = an acyl phosphate + holo-[ACP]. Its pathway is lipid metabolism; phospholipid metabolism. In terms of biological role, catalyzes the reversible formation of acyl-phosphate (acyl-PO(4)) from acyl-[acyl-carrier-protein] (acyl-ACP). This enzyme utilizes acyl-ACP as fatty acyl donor, but not acyl-CoA. This chain is Phosphate acyltransferase, found in Pseudomonas putida (strain ATCC 700007 / DSM 6899 / JCM 31910 / BCRC 17059 / LMG 24140 / F1).